Consider the following 138-residue polypeptide: Phospholipase A2 EC3 (138 aa).

Positions 1–16 (MRTLWIVAVWLMGVEG) are cleaved as a signal peptide. Disulfide bonds link cysteine 42–cysteine 131, cysteine 44–cysteine 60, cysteine 59–cysteine 111, cysteine 65–cysteine 138, cysteine 66–cysteine 104, cysteine 73–cysteine 97, and cysteine 91–cysteine 102. 3 residues coordinate Ca(2+): tyrosine 43, glycine 45, and glycine 47. Histidine 63 is a catalytic residue. A Ca(2+)-binding site is contributed by aspartate 64. The active site involves aspartate 105.

The protein belongs to the phospholipase A2 family. Group II subfamily. Ca(2+) serves as cofactor.

Its subcellular location is the secreted. It catalyses the reaction a 1,2-diacyl-sn-glycero-3-phosphocholine + H2O = a 1-acyl-sn-glycero-3-phosphocholine + a fatty acid + H(+). Functionally, PA2 catalyzes the calcium-dependent hydrolysis of the 2-acyl groups in 3-sn-phosphoglycerides. The sequence is that of Phospholipase A2 EC3 from Echis coloratus (Carpet viper).